Here is a 340-residue protein sequence, read N- to C-terminus: MSDQKINILAIESSCDDTAAAVLCNGKILSNIVATQKVHEQYGGVVPELASRAHQQNIVPVIHQALAKANIDKKDVSAIAFTRGPGLMGSLLVGTSFAKSLSMGLNIPLIEINHMQAHILAHFIEEDDFEKPTFPFLAMTISGGHTQIVKVTDYFKMEVIGETIDDAVGEAFDKSAKILGLPYPGGPLIDKYAQEGDPKAFKFPKPKVDGLNFSFSGFKTAVLYFVQRETKNDPEFVEKNLKDICASIQYTIIGILIDKLKKAVKETGITQVAIAGGVSANSGIRQALKDAEQKWGWKCFVPKFEYTTDNAAMIGIAGYHKYLKKDFADFSVTAQSRYKF.

Positions 114 and 118 each coordinate Fe cation. Residues 140–144, Asp-173, Gly-186, Asp-190, and Asn-281 each bind substrate; that span reads TISGG. A Fe cation-binding site is contributed by Asp-309.

The protein belongs to the KAE1 / TsaD family. Fe(2+) is required as a cofactor.

It localises to the cytoplasm. The catalysed reaction is L-threonylcarbamoyladenylate + adenosine(37) in tRNA = N(6)-L-threonylcarbamoyladenosine(37) in tRNA + AMP + H(+). Its function is as follows. Required for the formation of a threonylcarbamoyl group on adenosine at position 37 (t(6)A37) in tRNAs that read codons beginning with adenine. Is involved in the transfer of the threonylcarbamoyl moiety of threonylcarbamoyl-AMP (TC-AMP) to the N6 group of A37, together with TsaE and TsaB. TsaD likely plays a direct catalytic role in this reaction. The polypeptide is tRNA N6-adenosine threonylcarbamoyltransferase (Christiangramia forsetii (strain DSM 17595 / CGMCC 1.15422 / KT0803) (Gramella forsetii)).